Reading from the N-terminus, the 202-residue chain is Stress enhanced protein 2, chloroplastic (202 aa).

Residues 1–60 constitute a chloroplast transit peptide; the sequence is MAMATRAIRYQLPSPRFRAPRCESSEPIKQIQIQQRPRGGDLAENGKIVLQPRLCTLRSY. The next 2 helical transmembrane spans lie at 111-131 and 142-162; these read LAMI…NSLF and AIGA…LTIS.

Belongs to the ELIP/psbS family.

The protein localises to the plastid. It localises to the chloroplast thylakoid membrane. May be involved in non-photochemical quenching, a process that maintains the balance between dissipation and utilization of light energy to minimize generation of oxidizing molecules, thereby protecting the plant against photo-oxidative damage. May play a photoprotective role in the thylakoid membrane in response to light stress. The polypeptide is Stress enhanced protein 2, chloroplastic (Arabidopsis thaliana (Mouse-ear cress)).